Reading from the N-terminus, the 674-residue chain is Regulator of G-protein signaling 9 (674 aa).

In terms of domain architecture, DEP spans 30-105; that stretch reads PETGVRMQNQ…PDGSLYRFQT (76 aa). A G protein gamma domain is found at 219 to 280; that stretch reads KQTVVAVKKE…NPWITDDTQF (62 aa). The region spanning 298 to 413 is the RGS domain; sequence RWAFNFSELI…YARYLKSPIY (116 aa). Positions 533-573 are disordered; that stretch reads SSGLEQKGECSGSMAPRGPSVTESSEASLDTSWPRSRPRAP. Residues 553–565 are compositionally biased toward polar residues; sequence VTESSEASLDTSW.

As to quaternary structure, heterodimer with GNB5. Interacts with RGS7BP, leading to regulate the subcellular location of the heterodimer formed with GNB5. Component of the RGS9-1-Gbeta5 complex composed of RGS9 (RGS9-1), Gbeta5 (GNB5) and RGS9BP. Interacts with PDE6G and GNAT1. Retinal isoform 3 is light-dependent phosphorylated at 'Ser-478'. Phosphorylation is decreased by light exposition. Highly expressed in the caudate and putamen, lower levels found in the hypothalamus and nucleus accumbens and very low levels in cerebellum. Not expressed in globus pallidus or cingulate cortex. Isoform 2 is expressed predominantly in pineal gland and retina. Isoform 3 is expressed in retina (abundant in photoreceptors).

Its subcellular location is the membrane. Inhibits signal transduction by increasing the GTPase activity of G protein alpha subunits thereby driving them into their inactive GDP-bound form. Binds to GNAT1. Involved in phototransduction; key element in the recovery phase of visual transduction. The sequence is that of Regulator of G-protein signaling 9 (RGS9) from Homo sapiens (Human).